Consider the following 418-residue polypeptide: F-box/LRR-repeat protein 14 (418 aa).

One can recognise an F-box domain in the interval 2–48 (ETHISCLFPELLAMIFGYLDVRDKGRAAQVCTAWRDAAYHKSVWRGV). The tract at residues 2–48 (ETHISCLFPELLAMIFGYLDVRDKGRAAQVCTAWRDAAYHKSVWRGV) is required for down-regulation of SNAI1. LRR repeat units follow at residues 144–163 (GLEVLELGGCSNITNTGLLL), 170–191 (RLKSLNLRSCRHLSDVGIGHLA), 203–225 (GLEQLTLQDCQKLTDLSLKHISR), 229–250 (GLRLLNLSFCGGISDAGLLHLS), and 254–275 (SLRSLNLRSCDNISDTGIMHLA).

In terms of assembly, part of a SCF (SKP1-cullin-F-box) ubiquitin-protein ligase complex. Interacts with SKP1 and CUL1. Interacts with SNAI1; the interaction requires the phosphorylation of the two serine residues in the substrate destruction motif D-S-G-X(2,3,4)-S.

The protein localises to the cytoplasm. Functionally, substrate-recognition component of some SCF (SKP1-CUL1-F-box protein)-type E3 ubiquitin-protein ligase complexes. The SCF(FBXL14) complex acts by mediating ubiquitination and subsequent degradation of SNAI1. The sequence is that of F-box/LRR-repeat protein 14 (FBXL14) from Homo sapiens (Human).